Consider the following 492-residue polypeptide: G2/mitotic-specific cyclin CYB1 (492 aa).

Residues 1-176 are disordered; sequence MPQVTKTNNE…QPEVGERSQS (176 aa). Positions 23 to 33 are enriched in polar residues; sequence QESISTIKNTT. Residues 34–58 show a composition bias toward low complexity; it reads ISNSQHKQQTQQQISSPPQVSVTSS. A compositionally biased stretch (polar residues) spans 59-83; it reads EGVSHVNTRQYLGDVSNQYITNAKP. A compositionally biased stretch (low complexity) spans 111-135; that stretch reads ASDNNNNGSTSSSSNSSNNNNNDAN.

Belongs to the cyclin family. Cyclin AB subfamily.

Essential for the control of the cell cycle at the G2/M (mitosis) transition. Interacts with the CDC2 protein kinase to form MPF. G2/M cyclins accumulate steadily during G2 and are abruptly destroyed at mitosis. In Candida albicans (Yeast), this protein is G2/mitotic-specific cyclin CYB1 (CYB1).